A 536-amino-acid polypeptide reads, in one-letter code: Phosphoenolpyruvate carboxykinase (ATP) (536 aa).

Residues R61, Y195, and K201 each coordinate substrate. ATP is bound by residues K201, H220, and 236 to 244 (GLSGTGKTT). Residues K201 and H220 each contribute to the Mn(2+) site. D257 is a binding site for Mn(2+). E285, R322, and T447 together coordinate ATP. Residue R322 participates in substrate binding.

Belongs to the phosphoenolpyruvate carboxykinase (ATP) family. Mn(2+) is required as a cofactor.

It is found in the cytoplasm. It carries out the reaction oxaloacetate + ATP = phosphoenolpyruvate + ADP + CO2. The protein operates within carbohydrate biosynthesis; gluconeogenesis. Its function is as follows. Involved in the gluconeogenesis. Catalyzes the conversion of oxaloacetate (OAA) to phosphoenolpyruvate (PEP) through direct phosphoryl transfer between the nucleoside triphosphate and OAA. In Rhizobium etli (strain CIAT 652), this protein is Phosphoenolpyruvate carboxykinase (ATP).